The primary structure comprises 321 residues: Ferredoxin--NADP reductase (321 aa).

FAD is bound by residues glutamate 33, glutamine 41, tyrosine 46, valine 86, leucine 119, aspartate 277, and serine 318.

Belongs to the ferredoxin--NADP reductase type 2 family. As to quaternary structure, homodimer. FAD is required as a cofactor.

It catalyses the reaction 2 reduced [2Fe-2S]-[ferredoxin] + NADP(+) + H(+) = 2 oxidized [2Fe-2S]-[ferredoxin] + NADPH. The sequence is that of Ferredoxin--NADP reductase from Lactococcus lactis subsp. cremoris (strain MG1363).